Here is a 1508-residue protein sequence, read N- to C-terminus: Ras guanine nucleotide exchange factor Y (1508 aa).

Disordered regions lie at residues 1–73 (MIII…NNNE), 128–182 (KVLS…PKSV), 197–272 (IDNN…YSTS), 396–517 (ILQC…EDED), 565–593 (LSENRTKDLNQPSSQFSPSTSPSTNSIPT), 606–727 (LPNI…AEPS), 831–1021 (NVII…SNKE), and 1153–1172 (TNEDEDNSNSNSNSNKTNKN). Composition is skewed to low complexity over residues 9–22 (NINNSNNSNSNNNS) and 33–72 (NNNNTITGKNTNEIMNNNNNSNNNNNNNNNNNNNNNNNNN). Composition is skewed to polar residues over residues 128–150 (KVLSSPSKEVNSLKKSTNGTNTI) and 172–182 (DRTSQDIPKSV). Over residues 199–216 (NNTTNNNSNNNNNSSLST) the composition is skewed to low complexity. Residues 223–232 (DSLETNPIKD) show a composition bias toward basic and acidic residues. Positions 233 to 250 (EESEESEESEESKEEEEE) are enriched in acidic residues. Over residues 255–272 (IKTTKTTSETIESSYSTS) the composition is skewed to low complexity. The span at 399-409 (CKDDSSSKDQD) shows a compositional bias: basic and acidic residues. Residues 413 to 447 (NNSAGSSGNSSASNSNRNSIAFSSSNHFSSESSQS) are compositionally biased toward low complexity. Over residues 465–475 (PQSPSPSPSPP) the composition is skewed to pro residues. Positions 492 to 510 (FNQQTNFSVSPTKSPSNEK) are enriched in polar residues. 8 stretches are compositionally biased toward low complexity: residues 574–593 (NQPSSQFSPSTSPSTNSIPT), 606–660 (LPNI…LTES), 668–687 (NNNNNNNKNINNNNNNNNNN), 831–855 (NVIISNNTGNNNNNNNSSKNNNTVK), 862–891 (NKSSSSSQNNSPPSDFSLSVSPSPCSSLTP), 942–984 (SLWS…SPPT), 993–1019 (ITTGSSPPSTAGTSPPNDNGNNNNNSN), and 1160–1172 (SNSNSNSNKTNKN). Residues 659 to 686 (ESLKTRIEENNNNNNNKNINNNNNNNNN) adopt a coiled-coil conformation. The 161-residue stretch at 1074-1234 (NRIKVRSASL…IILKIIDRKA (161 aa)) folds into the N-terminal Ras-GEF domain. In terms of domain architecture, Ras-GEF spans 1278–1508 (DDLEIARQLT…LYKQSKIIEP (231 aa)).

Its function is as follows. Promotes the exchange of Ras-bound GDP by GTP. In Dictyostelium discoideum (Social amoeba), this protein is Ras guanine nucleotide exchange factor Y (gefY).